The primary structure comprises 247 residues: ATP synthase subunit a, chloroplastic (247 aa).

The next 5 helical transmembrane spans lie at 38 to 58 (QVLI…TIAV), 95 to 115 (VPFI…GALL), 134 to 154 (INTT…AGLT), 199 to 219 (LVVV…VMLL), and 220 to 240 (GLFT…AYIG).

This sequence belongs to the ATPase A chain family. In terms of assembly, F-type ATPases have 2 components, CF(1) - the catalytic core - and CF(0) - the membrane proton channel. CF(1) has five subunits: alpha(3), beta(3), gamma(1), delta(1), epsilon(1). CF(0) has four main subunits: a, b, b' and c.

The protein resides in the plastid. Its subcellular location is the chloroplast thylakoid membrane. Key component of the proton channel; it plays a direct role in the translocation of protons across the membrane. In Nicotiana sylvestris (Wood tobacco), this protein is ATP synthase subunit a, chloroplastic.